Reading from the N-terminus, the 106-residue chain is Flagellar transcriptional regulator FlhD (106 aa).

It belongs to the FlhD family. As to quaternary structure, homodimer; disulfide-linked. Forms a heterohexamer composed of two FlhC and four FlhD subunits. Each FlhC binds a FlhD dimer, forming a heterotrimer, and a hexamer assembles by dimerization of two heterotrimers.

It is found in the cytoplasm. In terms of biological role, functions in complex with FlhC as a master transcriptional regulator that regulates transcription of several flagellar and non-flagellar operons by binding to their promoter region. Activates expression of class 2 flagellar genes, including fliA, which is a flagellum-specific sigma factor that turns on the class 3 genes. Also regulates genes whose products function in a variety of physiological pathways. The polypeptide is Flagellar transcriptional regulator FlhD (Burkholderia pseudomallei (strain 1710b)).